The following is a 218-amino-acid chain: Chromophore lyase CpcT/CpeT 1 (218 aa).

The protein belongs to the CpcT/CpeT biliprotein lyase family.

Its function is as follows. Covalently attaches a chromophore to Cys residue(s) of phycobiliproteins. The protein is Chromophore lyase CpcT/CpeT 1 of Synechococcus sp. (strain JA-3-3Ab) (Cyanobacteria bacterium Yellowstone A-Prime).